The sequence spans 395 residues: Vibriobactin-specific isochorismate synthase (395 aa).

It belongs to the isochorismate synthase family.

The enzyme catalyses chorismate = isochorismate. It participates in siderophore biosynthesis; vibriobactin biosynthesis. This is Vibriobactin-specific isochorismate synthase (vibC) from Vibrio cholerae serotype O1 (strain ATCC 39315 / El Tor Inaba N16961).